We begin with the raw amino-acid sequence, 801 residues long: Interleukin-4 receptor subunit alpha (801 aa).

An N-terminal signal peptide occupies residues 1–25 (MGWLCTKFLSSVSCLILLWVTGSGG). Residues 26 to 232 (IKVLGDPTCF…NHFQLPLLQR (207 aa)) are Extracellular-facing. Cysteine 34 and cysteine 44 are disulfide-bonded. N-linked (GlcNAc...) asparagine glycosylation occurs at asparagine 71. Cysteines 74 and 86 form a disulfide. Positions 125-223 (APDNLTLHTN…EWSPSITWYN (99 aa)) constitute a Fibronectin type-III domain. Residues asparagine 128, asparagine 134, and asparagine 162 are each glycosylated (N-linked (GlcNAc...) asparagine). Phosphoserine is present on serine 164. Asparagine 176 carries an N-linked (GlcNAc...) asparagine glycan. Positions 212–216 (WSEWS) match the WSXWS motif motif. The helical transmembrane segment at 233-256 (LPLGVSISCICILLFCLTCYFSII) threads the bilayer. The Cytoplasmic segment spans residues 257-801 (KIKKIWWDQI…PVGTLGVTVS (545 aa)). The Box 1 motif signature appears at 262 to 270 (WWDQIPTPA). Positions 424-476 (VGQSSMAESSSLLPSESGQASTSWACFPTGPSETTCQVTGQQPPHPDPERATG) are disordered. Low complexity predominate over residues 426-444 (QSSMAESSSLLPSESGQAS). A required for IRS1 activation and IL4-induced cell growth region spans residues 439–549 (ESGQASTSWA…ESWEQILHMS (111 aa)). Positions 454–465 (PSETTCQVTGQQ) are enriched in polar residues. Tyrosine 492 bears the Phosphotyrosine mark. Residues 493–515 (RSFSDFSSPAPNPGELASEQKQA) are disordered. The interval 549–644 (SVLQHGTAGS…NSMPLFTFGL (96 aa)) is required for IL4-induced gene expression. Tyrosine 566, tyrosine 594, and tyrosine 622 each carry phosphotyrosine. An ITIM motif motif is present at residues 698-703 (IVYSSL). The interval 767–801 (RTPSNLSGVGKGPGHSPVPSQTTEVPVGTLGVTVS) is disordered.

This sequence belongs to the type I cytokine receptor family. Type 4 subfamily. As to quaternary structure, the functional IL4 receptor is formed by initial binding of IL4 to IL4R. Subsequent recruitment to the complex of the common gamma chain, in immune cells, creates a type I receptor and, in non-immune cells, of IL13RA1 forms a type II receptor. IL4R can also interact with the IL13/IL13RA1 complex to form a similar type II receptor. Interacts with PIK3C3. Interacts with the SH2-containing phosphatases, PTPN6/SHIP1, PTPN11/SHIP2 and INPP5D/SHIP. Interacts with JAK1 through a Box 1-containing region; inhibited by SOCS5. Interacts with SOCS5; inhibits IL4 signaling. Interacts with JAK3. Interacts with CLM1. Interacts with IL13RA2. In terms of processing, on IL4 binding, phosphorylated on C-terminal tyrosine residues. Isoform 2 is expressed in kidney, spleen, lung and liver.

Its subcellular location is the cell membrane. The protein resides in the secreted. In terms of biological role, receptor for both interleukin 4 and interleukin 13. Couples to the JAK1/2/3-STAT6 pathway. The IL4 response is involved in promoting Th2 differentiation. The IL4/IL13 responses are involved in regulating IgE production and, chemokine and mucus production at sites of allergic inflammation. In certain cell types, can signal through activation of insulin receptor substrates, IRS1/IRS2. Isoform 2 (soluble form) inhibits IL4-induced spleen cell proliferation. This chain is Interleukin-4 receptor subunit alpha (Il4r), found in Rattus norvegicus (Rat).